A 544-amino-acid chain; its full sequence is NXPE family member 4 (544 aa).

The first 27 residues, 1 to 27, serve as a signal peptide directing secretion; the sequence is MKISMINYKSLLALLFILASWIIFTVF. 7 N-linked (GlcNAc...) asparagine glycosylation sites follow: Asn29, Asn38, Asn47, Asn48, Asn92, Asn160, and Asn210.

It belongs to the NXPE family.

The protein localises to the secreted. The sequence is that of NXPE family member 4 (NXPE4) from Homo sapiens (Human).